We begin with the raw amino-acid sequence, 51 residues long: Large ribosomal subunit protein bL33 (51 aa).

It belongs to the bacterial ribosomal protein bL33 family.

The polypeptide is Large ribosomal subunit protein bL33 (Psychrobacter sp. (strain PRwf-1)).